A 37-amino-acid chain; its full sequence is Large ribosomal subunit protein bL36 (37 aa).

The protein belongs to the bacterial ribosomal protein bL36 family.

The protein is Large ribosomal subunit protein bL36 of Salinispora arenicola (strain CNS-205).